A 239-amino-acid chain; its full sequence is tRNA (guanine-N(7)-)-methyltransferase (239 aa).

S-adenosyl-L-methionine is bound by residues Gly-64, 87–88, 120–121, and Leu-140; these read EI and NA. Asp-143 is a catalytic residue. 218 to 220 serves as a coordination point for S-adenosyl-L-methionine; sequence SEE.

Belongs to the class I-like SAM-binding methyltransferase superfamily. TrmB family.

Its subcellular location is the nucleus. It catalyses the reaction guanosine(46) in tRNA + S-adenosyl-L-methionine = N(7)-methylguanosine(46) in tRNA + S-adenosyl-L-homocysteine. Its pathway is tRNA modification; N(7)-methylguanine-tRNA biosynthesis. Catalyzes the formation of N(7)-methylguanine at position 46 (m7G46) in tRNA. The chain is tRNA (guanine-N(7)-)-methyltransferase from Culex quinquefasciatus (Southern house mosquito).